The sequence spans 121 residues: Basic phospholipase A2 homolog AppP2 (121 aa).

7 disulfide bridges follow: Cys-26-Cys-115, Cys-28-Cys-44, Cys-43-Cys-95, Cys-49-Cys-121, Cys-50-Cys-88, Cys-57-Cys-81, and Cys-75-Cys-86. Positions 105–117 are important for membrane-damaging activities in eukaryotes and bacteria; heparin-binding; that stretch reads KKYKAYFKLKCKK.

It belongs to the phospholipase A2 family. Group II subfamily. K49 sub-subfamily. As to quaternary structure, monomer. In terms of tissue distribution, expressed by the venom gland.

Its subcellular location is the secreted. Functionally, snake venom phospholipase A2 (PLA2) that lacks enzymatic activity. Displays edema-inducing activities. Is myotoxic. A model of myotoxic mechanism has been proposed: an apo Lys49-PLA2 is activated by the entrance of a hydrophobic molecule (e.g. fatty acid) at the hydrophobic channel of the protein leading to a reorientation of a monomer. This reorientation causes a transition between 'inactive' to 'active' states, causing alignment of C-terminal and membrane-docking sites (MDoS) side-by-side and putting the membrane-disruption sites (MDiS) in the same plane, exposed to solvent and in a symmetric position for both monomers. The MDoS region stabilizes the toxin on membrane by the interaction of charged residues with phospholipid head groups. Subsequently, the MDiS region destabilizes the membrane with penetration of hydrophobic residues. This insertion causes a disorganization of the membrane, allowing an uncontrolled influx of ions (i.e. calcium and sodium), and eventually triggering irreversible intracellular alterations and cell death. In Agkistrodon piscivorus piscivorus (Eastern cottonmouth), this protein is Basic phospholipase A2 homolog AppP2.